Here is a 448-residue protein sequence, read N- to C-terminus: Divalent metal cation transporter MntH (448 aa).

Positions Met1–Lys10 are enriched in basic and acidic residues. The disordered stretch occupies residues Met1–Pro20. The next 11 helical transmembrane spans lie at Leu41–Trp61, Ser69–Leu89, Gly117–Ile137, Phe147–Phe167, Ile176–Val196, Ile215–Pro235, Phe270–Phe290, Leu307–Ala327, Val363–Glu383, Leu384–Val404, and Ile424–Thr444.

The protein belongs to the NRAMP family.

The protein resides in the cell membrane. In terms of biological role, h(+)-stimulated, divalent metal cation uptake system. This is Divalent metal cation transporter MntH from Listeria monocytogenes serotype 4b (strain CLIP80459).